Reading from the N-terminus, the 463-residue chain is Dipeptidyl peptidase 1 (463 aa).

An N-terminal signal peptide occupies residues 1 to 24 (MGPWSGSRLVALLLLVYGAGSVRG). N-linked (GlcNAc...) asparagine glycans are attached at residues asparagine 29 and asparagine 53. 2 disulfides stabilise this stretch: cysteine 30/cysteine 118 and cysteine 54/cysteine 136. Residues 135–230 (ACFTGRKTGN…TAEIQKKILH (96 aa)) constitute a propeptide that is removed on maturation. Residue asparagine 144 is glycosylated (N-linked (GlcNAc...) asparagine). 3 disulfide bridges follow: cysteine 255/cysteine 298, cysteine 291/cysteine 331, and cysteine 321/cysteine 337. The active site involves cysteine 258. The N-linked (GlcNAc...) asparagine glycan is linked to asparagine 276. Phenylalanine 302 and tyrosine 304 together coordinate chloride. Position 347 (tyrosine 347) interacts with chloride. Active-site residues include histidine 405 and asparagine 427.

The protein belongs to the peptidase C1 family. As to quaternary structure, tetramer of heterotrimers consisting of exclusion domain, heavy- and light chains. Chloride is required as a cofactor.

It localises to the lysosome. The enzyme catalyses Release of an N-terminal dipeptide, Xaa-Yaa-|-Zaa-, except when Xaa is Arg or Lys, or Yaa or Zaa is Pro.. Thiol protease. Has dipeptidylpeptidase activity. Active against a broad range of dipeptide substrates composed of both polar and hydrophobic amino acids. Proline cannot occupy the P1 position and arginine cannot occupy the P2 position of the substrate. Can act as both an exopeptidase and endopeptidase. Activates serine proteases such as elastase, cathepsin G and granzymes A and B. This chain is Dipeptidyl peptidase 1 (CTSC), found in Bos taurus (Bovine).